A 126-amino-acid chain; its full sequence is UPF0102 protein gll3754 (126 aa).

The protein belongs to the UPF0102 family.

This chain is UPF0102 protein gll3754, found in Gloeobacter violaceus (strain ATCC 29082 / PCC 7421).